The chain runs to 209 residues: dITP/XTP pyrophosphatase (209 aa).

Residue 22 to 27 (SHNQGK) participates in substrate binding. Asp83 serves as the catalytic Proton acceptor. Residue Asp83 participates in Mg(2+) binding. Substrate is bound by residues Ser84, 167-170 (FGYD), Lys190, and 195-196 (HR).

It belongs to the HAM1 NTPase family. Homodimer. The cofactor is Mg(2+).

The catalysed reaction is XTP + H2O = XMP + diphosphate + H(+). It catalyses the reaction dITP + H2O = dIMP + diphosphate + H(+). It carries out the reaction ITP + H2O = IMP + diphosphate + H(+). Its function is as follows. Pyrophosphatase that catalyzes the hydrolysis of nucleoside triphosphates to their monophosphate derivatives, with a high preference for the non-canonical purine nucleotides XTP (xanthosine triphosphate), dITP (deoxyinosine triphosphate) and ITP. Seems to function as a house-cleaning enzyme that removes non-canonical purine nucleotides from the nucleotide pool, thus preventing their incorporation into DNA/RNA and avoiding chromosomal lesions. This is dITP/XTP pyrophosphatase from Zymomonas mobilis subsp. mobilis (strain ATCC 31821 / ZM4 / CP4).